A 159-amino-acid polypeptide reads, in one-letter code: Regulatory protein RecX (159 aa).

This sequence belongs to the RecX family.

The protein resides in the cytoplasm. In terms of biological role, modulates RecA activity. The chain is Regulatory protein RecX from Chlorobium limicola (strain DSM 245 / NBRC 103803 / 6330).